The primary structure comprises 108 residues: Small ribosomal subunit protein eS25y (108 aa).

Positions 1–36 (MAPKKDKVPPPSSKPAKSGGGKQKKKKWSKGKQKEK) are disordered. Over residues 22-31 (KQKKKKWSKG) the composition is skewed to basic residues.

It belongs to the eukaryotic ribosomal protein eS25 family.

The polypeptide is Small ribosomal subunit protein eS25y (RPS25B) (Arabidopsis thaliana (Mouse-ear cress)).